Reading from the N-terminus, the 62-residue chain is Conotoxin reg3.5 (62 aa).

A signal peptide spans 1-22; it reads MMFKLGVLLTICLLLFPLTGTA. A propeptide spanning residues 23–49 is cleaved from the precursor; it reads LDGDQLAEHMLDISSGINDRWFDPVRK. Disulfide bonds link Cys-50–Cys-60, Cys-51–Cys-58, and Cys-56–Cys-61.

Belongs to the conotoxin M superfamily. In terms of tissue distribution, expressed by the venom duct.

It localises to the secreted. The sequence is that of Conotoxin reg3.5 from Conus regius (Crown cone).